A 168-amino-acid polypeptide reads, in one-letter code: 2-C-methyl-D-erythritol 2,4-cyclodiphosphate synthase (168 aa).

Aspartate 13 and histidine 15 together coordinate a divalent metal cation. 4-CDP-2-C-methyl-D-erythritol 2-phosphate is bound by residues 13–15 and 39–40; these read DVH and HS. Residue histidine 47 participates in a divalent metal cation binding. 4-CDP-2-C-methyl-D-erythritol 2-phosphate contacts are provided by residues 61 to 63, 66 to 70, phenylalanine 144, and lysine 147; these read DIG and FPDTD.

The protein belongs to the IspF family. As to quaternary structure, homotrimer. Requires a divalent metal cation as cofactor.

The enzyme catalyses 4-CDP-2-C-methyl-D-erythritol 2-phosphate = 2-C-methyl-D-erythritol 2,4-cyclic diphosphate + CMP. It functions in the pathway isoprenoid biosynthesis; isopentenyl diphosphate biosynthesis via DXP pathway; isopentenyl diphosphate from 1-deoxy-D-xylulose 5-phosphate: step 4/6. Involved in the biosynthesis of isopentenyl diphosphate (IPP) and dimethylallyl diphosphate (DMAPP), two major building blocks of isoprenoid compounds. Catalyzes the conversion of 4-diphosphocytidyl-2-C-methyl-D-erythritol 2-phosphate (CDP-ME2P) to 2-C-methyl-D-erythritol 2,4-cyclodiphosphate (ME-CPP) with a corresponding release of cytidine 5-monophosphate (CMP). This chain is 2-C-methyl-D-erythritol 2,4-cyclodiphosphate synthase, found in Cupriavidus metallidurans (strain ATCC 43123 / DSM 2839 / NBRC 102507 / CH34) (Ralstonia metallidurans).